The chain runs to 209 residues: Ribonuclease HII (209 aa).

An RNase H type-2 domain is found at 5–202 (SMTLGIDEAG…KNRILNPKLL (198 aa)). A divalent metal cation contacts are provided by Asp11, Glu12, and Asp108.

It belongs to the RNase HII family. Mn(2+) is required as a cofactor. It depends on Mg(2+) as a cofactor.

The protein localises to the cytoplasm. The catalysed reaction is Endonucleolytic cleavage to 5'-phosphomonoester.. Functionally, endonuclease that specifically degrades the RNA of RNA-DNA hybrids. In Helicobacter pylori (strain J99 / ATCC 700824) (Campylobacter pylori J99), this protein is Ribonuclease HII (rnhB).